We begin with the raw amino-acid sequence, 248 residues long: 3-deoxy-manno-octulosonate cytidylyltransferase (248 aa).

It belongs to the KdsB family.

The protein localises to the cytoplasm. It catalyses the reaction 3-deoxy-alpha-D-manno-oct-2-ulosonate + CTP = CMP-3-deoxy-beta-D-manno-octulosonate + diphosphate. It participates in nucleotide-sugar biosynthesis; CMP-3-deoxy-D-manno-octulosonate biosynthesis; CMP-3-deoxy-D-manno-octulosonate from 3-deoxy-D-manno-octulosonate and CTP: step 1/1. Its pathway is bacterial outer membrane biogenesis; lipopolysaccharide biosynthesis. Activates KDO (a required 8-carbon sugar) for incorporation into bacterial lipopolysaccharide in Gram-negative bacteria. The sequence is that of 3-deoxy-manno-octulosonate cytidylyltransferase from Chlorobaculum parvum (strain DSM 263 / NCIMB 8327) (Chlorobium vibrioforme subsp. thiosulfatophilum).